The primary structure comprises 210 residues: SAP domain-containing ribonucleoprotein (210 aa).

Ala2 is modified (N-acetylalanine). Residues 8–42 form the SAP domain; it reads LHKLKLAELKQECLARGLETKGIKQDLINRLQAYL. At Lys10 the chain carries N6-acetyllysine. The segment covering 45-64 has biased composition (acidic residues); it reads HAEEEANEEDVLGDETEEEE. The interval 45–87 is disordered; sequence HAEEEANEEDVLGDETEEEEPKPIELPVKEEEPPEKVVDMASE. The span at 65-87 shows a compositional bias: basic and acidic residues; it reads PKPIELPVKEEEPPEKVVDMASE. N6-acetyllysine is present on Lys142. A disordered region spans residues 161-210; that stretch reads VSSISRKSEDDEKLKKRKERFGIVTSSAGTGTTEDTEAKKRKRAERFGIA. Ser163 carries the post-translational modification Phosphoserine. Residues 184 to 193 are compositionally biased toward polar residues; sequence VTSSAGTGTT.

Belongs to the SAP domain-containing ribonucleoprotein family. In terms of assembly, interacts with DDX39A. Interacts with FUS. Interacts (via the C-terminal domain) with DDX39B; the interaction is direct and facilitates RNA binding of DDX39B. Component of the transcription/export (TREX) complex at least composed of ALYREF/THOC4, DDX39B, SARNP/CIP29, CHTOP and the THO subcomplex; TREX seems to have dynamic structure involving ATP-dependent remodeling; in the complex interacts directly with DDX39B in a ATP-dependent manner which bridges it to ALYREF/THOC4.

Its subcellular location is the nucleus. The protein localises to the nucleus speckle. In terms of biological role, binds both single-stranded and double-stranded DNA with higher affinity for the single-stranded form. Specifically binds to scaffold/matrix attachment region DNA. Also binds single-stranded RNA. Enhances RNA unwinding activity of DDX39A. May participate in important transcriptional or translational control of cell growth, metabolism and carcinogenesis. Component of the TREX complex which is thought to couple mRNA transcription, processing and nuclear export, and specifically associates with spliced mRNA and not with unspliced pre-mRNA. The TREX complex is recruited to spliced mRNAs by a transcription-independent mechanism, binds to mRNA upstream of the exon-junction complex (EJC) and is recruited in a splicing- and cap-dependent manner to a region near the 5' end of the mRNA where it functions in mRNA export to the cytoplasm via the TAP/NXF1 pathway. Associates with DDX39B, which facilitates RNA binding of DDX39B and likely plays a role in mRNA export. The polypeptide is SAP domain-containing ribonucleoprotein (Sarnp) (Rattus norvegicus (Rat)).